A 268-amino-acid chain; its full sequence is Large ribosomal subunit protein uL4 (268 aa).

This sequence belongs to the universal ribosomal protein uL4 family. In terms of assembly, part of the 50S ribosomal subunit.

Functionally, one of the primary rRNA binding proteins, this protein initially binds near the 5'-end of the 23S rRNA. It is important during the early stages of 50S assembly. It makes multiple contacts with different domains of the 23S rRNA in the assembled 50S subunit and ribosome. Its function is as follows. Forms part of the polypeptide exit tunnel. This Nanoarchaeum equitans (strain Kin4-M) protein is Large ribosomal subunit protein uL4.